We begin with the raw amino-acid sequence, 299 residues long: tRNA dimethylallyltransferase (299 aa).

Residue 11–18 (GPTAVGKT) participates in ATP binding. Position 13–18 (13–18 (TAVGKT)) interacts with substrate. Residues 36 to 39 (DSQQ) are interaction with substrate tRNA.

Belongs to the IPP transferase family. As to quaternary structure, monomer. Mg(2+) is required as a cofactor.

It carries out the reaction adenosine(37) in tRNA + dimethylallyl diphosphate = N(6)-dimethylallyladenosine(37) in tRNA + diphosphate. Its function is as follows. Catalyzes the transfer of a dimethylallyl group onto the adenine at position 37 in tRNAs that read codons beginning with uridine, leading to the formation of N6-(dimethylallyl)adenosine (i(6)A). The chain is tRNA dimethylallyltransferase from Streptococcus pyogenes serotype M18 (strain MGAS8232).